Consider the following 91-residue polypeptide: Sm-like protein LSM36B (91 aa).

A Sm domain is found at 14-86 (TPADFLKSIR…VLYISTTKGT (73 aa)).

This sequence belongs to the snRNP Sm proteins family. As to quaternary structure, component of the heptameric LSM1-LSM7 complex that forms a seven-membered ring structure with a donut shape. The LSM subunits are arranged in the order LSM1, LSM2, LSM3, LSM6, LSM5, LSM7 and LSM4. Component of the heptameric LSM2-LSM8 complex that forms a seven-membered ring structure with a donut shape. The LSM subunits are arranged in the order LSM8, LSM2, LSM3, LSM6, LSM5, LSM7 and LSM4. LSM6B subunit interacts only with its two neighboring subunits, LSM3A or LSM3B and LSM5. Expressed in roots, leaves, stems, flowers and siliques.

It is found in the cytoplasm. The protein localises to the nucleus. Component of LSM protein complexes, which are involved in RNA processing. Component of the cytoplasmic LSM1-LSM7 complex which is involved in mRNA degradation by promoting decapping and leading to accurate 5'-3' mRNA decay. The cytoplasmic LSM1-LSM7 complex regulates developmental gene expression by the decapping of specific development-related transcripts. Component of the nuclear LSM2-LSM8 complex which is involved splicing nuclear mRNAs. LSM2-LSM8 binds directly to the U6 small nuclear RNAs (snRNAs) and is essential for accurate splicing of selected development-related mRNAs through the stabilization of the spliceosomal U6 snRNA. Plays a critical role in the regulation of development-related gene expression. In Arabidopsis thaliana (Mouse-ear cress), this protein is Sm-like protein LSM36B.